Consider the following 386-residue polypeptide: DNA dC-&gt;dU-editing enzyme APOBEC-3D (386 aa).

CMP/dCMP-type deaminase domains are found at residues 29 to 145 (GRSY…DWRW) and 187 to 334 (DDNY…LCSL). Zn(2+)-binding residues include H78, C109, C112, and H262. The Proton donor role is filled by E264. Zn(2+) is bound by residues C293 and C296.

The protein belongs to the cytidine and deoxycytidylate deaminase family. Can form homo- and heterodimers with APOBEC3F and APOBEC3G. Interacts with L1RE1; this interaction inhibits LINE-1 retrotransposition. As to quaternary structure, (Microbial infection) Interacts with HIV-1 Vif. This interaction triggers APOBEC3D polyubiquitylation and degradation by the 26S proteasome. Requires Zn(2+) as cofactor. As to expression, expressed in lymphoid organs. Also detected in non-lymphoid tissues including lung.

The protein resides in the cytoplasm. The protein localises to the P-body. The enzyme catalyses a 2'-deoxycytidine in single-stranded DNA + H2O + H(+) = a 2'-deoxyuridine in single-stranded DNA + NH4(+). Its activity is regulated as follows. (Microbial infection) Antiviral activity is neutralized by the HIV-1 virion infectivity factor (Vif), that prevents its incorporation into progeny virions by both inhibiting its translation and/or by inducing its ubiquitination and subsequent degradation by the 26S proteasome. In terms of biological role, DNA deaminase (cytidine deaminase) which acts as an inhibitor of retrovirus replication and retrotransposon mobility via deaminase-dependent and -independent mechanisms. Exhibits antiviral activity against HIV-1. After the penetration of retroviral nucleocapsids into target cells of infection and the initiation of reverse transcription, it can induce the conversion of cytosine to uracil in the minus-sense single-strand viral DNA, leading to G-to-A hypermutations in the subsequent plus-strand viral DNA. The resultant detrimental levels of mutations in the proviral genome, along with a deamination-independent mechanism that works prior to the proviral integration, together exert efficient antiretroviral effects in infected target cells. Selectively targets single-stranded DNA and does not deaminate double-stranded DNA or single- or double-stranded RNA. Also inhibits the mobility of LTR and non-LTR retrotransposons. Its function is as follows. (Microbial infection) Enhances hepatitis B virus/HBV replication by excluding restriction factors APOBEC3F and APOBEC3G from HBV capsids. This Homo sapiens (Human) protein is DNA dC-&gt;dU-editing enzyme APOBEC-3D.